Reading from the N-terminus, the 479-residue chain is MCDKDRFKVIIVGGSVAGLTLAHCLQRAGIDHVVLEKNSDLSPQVGASIGIIPNGGRILDQLGLFDAVERMTYPLSIATITYPDGYSFRNNYPKTVDERFGYPIAFLDRQKFLEILHTSYPDPSNIHTNCRVTHIRRHDSHMEVVTSSGQEYTGDLVVGADGVHSVIRSEMWKLADALEPGRVSKREKRSMKVEYACVFGISLPVPGLKVGDQVNAFHDGLTIITIHGKNGRVFWFVIKKLDDMYTYPDTVRFSSADAVRTCENIVHFPLVNGATFGHVWENREVTSMTALEENIFNTWYADRIVCIGDSIHKMTPNIGQGANTAIEDATVLTNLLYDRLSKNGHKKLARQELLQLLREFQSQRFRRVNKIYQDSRFLVRLHARDGIVKSLLARYIVPYMTELPADLASKSIADSPTIGFLPLPSRSGPGWLQWSRKQRRPATPWILVLLVIVVSFGLHSPELVIPTFWSNSLVSKTVE.

A helical membrane pass occupies residues 10–30 (IIVGGSVAGLTLAHCLQRAGI). FAD contacts are provided by Glu-36, Gly-50, Arg-109, Asp-309, and Ala-322. Residues 445 to 465 (WILVLLVIVVSFGLHSPELVI) form a helical membrane-spanning segment.

This sequence belongs to the paxM FAD-dependent monooxygenase family. The cofactor is FAD.

It is found in the membrane. The protein operates within secondary metabolite biosynthesis. In terms of biological role, FAD-dependent monooxygenase; part of the ATM1 gene cluster that mediates the biosynthesis of aflatrem, a tremorgenic mycotoxin with acute neurotoxic effects. Synthesis of geranylgeranyl diphosphate (GGPP) by AtmG (a GGPP synthase) precedes condensation of GGPP with indole 3-glycerol phosphate, followed by epoxidation and cyclization by AtmM (a FAD-dependent monooxygenase) and AtmC (a prenyltransferase) to produce paspaline. AtmB is also essential for paspaline production, but its exact role has not been identified yet. AtmP, a cytochrome P450 monooxygenase, subsequently converts paspaline to 13-desoxypaxilline via PC-M6 by removal of the C-30 methyl group and oxidation at C-10. AtmQ, a cytochrome P450 monooxygenase, then catalyzes the oxidation of 13-desoxypaxilline, first at C-7 to produce paspalicine and then at C-13 to form paspalinine. Finally, AtmD prenylates paspalinine to form aflatrem. In Aspergillus flavus, this protein is FAD-dependent monooxygenase atmM.